Consider the following 275-residue polypeptide: Formamidopyrimidine-DNA glycosylase (275 aa).

Proline 2 (schiff-base intermediate with DNA) is an active-site residue. Glutamate 3 functions as the Proton donor in the catalytic mechanism. Lysine 58 functions as the Proton donor; for beta-elimination activity in the catalytic mechanism. Histidine 91 and arginine 110 together coordinate DNA. The FPG-type zinc finger occupies 238-272 (QVYGQTGKPCPRCGQAIVKLKVGGRGTHICPKCQK). Residue arginine 262 is the Proton donor; for delta-elimination activity of the active site.

The protein belongs to the FPG family. In terms of assembly, monomer. Zn(2+) serves as cofactor.

It catalyses the reaction Hydrolysis of DNA containing ring-opened 7-methylguanine residues, releasing 2,6-diamino-4-hydroxy-5-(N-methyl)formamidopyrimidine.. The catalysed reaction is 2'-deoxyribonucleotide-(2'-deoxyribose 5'-phosphate)-2'-deoxyribonucleotide-DNA = a 3'-end 2'-deoxyribonucleotide-(2,3-dehydro-2,3-deoxyribose 5'-phosphate)-DNA + a 5'-end 5'-phospho-2'-deoxyribonucleoside-DNA + H(+). Functionally, involved in base excision repair of DNA damaged by oxidation or by mutagenic agents. Acts as a DNA glycosylase that recognizes and removes damaged bases. Has a preference for oxidized purines, such as 7,8-dihydro-8-oxoguanine (8-oxoG). Has AP (apurinic/apyrimidinic) lyase activity and introduces nicks in the DNA strand. Cleaves the DNA backbone by beta-delta elimination to generate a single-strand break at the site of the removed base with both 3'- and 5'-phosphates. This chain is Formamidopyrimidine-DNA glycosylase, found in Streptococcus pyogenes serotype M18 (strain MGAS8232).